The following is a 188-amino-acid chain: dCTP deaminase (188 aa).

Residues 111–116 (KSTYAR), 135–137 (TLE), glutamine 156, tyrosine 170, and glutamine 180 contribute to the dCTP site. Glutamate 137 (proton donor/acceptor) is an active-site residue.

It belongs to the dCTP deaminase family. Homotrimer.

It carries out the reaction dCTP + H2O + H(+) = dUTP + NH4(+). It participates in pyrimidine metabolism; dUMP biosynthesis; dUMP from dCTP (dUTP route): step 1/2. Functionally, catalyzes the deamination of dCTP to dUTP. The protein is dCTP deaminase of Nitrosomonas europaea (strain ATCC 19718 / CIP 103999 / KCTC 2705 / NBRC 14298).